Consider the following 877-residue polypeptide: Neurotrypsin (877 aa).

Positions 1 to 20 (MTLARFVLALVLGALPEVVS) are cleaved as a signal peptide. N26 carries N-linked (GlcNAc...) asparagine glycosylation. The tract at residues 31–90 (HRHRHRHSPPPGLQYPYYLPTQQRPPRTRPPPPLPRFPRPPRALPAQRPHALQAGHTPRP) is disordered. Residues 44-55 (QYPYYLPTQQRP) show a composition bias toward low complexity. The segment covering 58–73 (TRPPPPLPRFPRPPRA) has biased composition (pro residues). The Kringle domain maps to 95 to 167 (CPAGEPWVSV…GKVDWGYCDC (73 aa)). Disulfide bonds link C95/C167, C111/C151, C140/C165, C197/C261, C210/C271, C241/C251, C307/C371, C320/C381, C351/C361, C414/C477, C427/C487, C457/C467, C527/C591, C540/C601, C571/C581, C621/C752, C663/C679, C767/C833, C796/C810, and C823/C852. SRCR domains are found at residues 172-273 (VRLR…TCSF), 282-383 (IRLV…SCTP), 389-489 (IRLA…ACYP), and 502-603 (VRLM…ICDY). Residues 621–632 (CGLRLLHRRQKR) form a zymogen activation region region. In terms of domain architecture, Peptidase S1 spans 633 to 876 (IIGGKNSLRG…FVPWIKSVTK (244 aa)). The active-site Charge relay system is the H678. An N-linked (GlcNAc...) asparagine glycan is attached at N685. The active-site Charge relay system is the D728. The Charge relay system role is filled by S827.

This sequence belongs to the peptidase S1 family.

It localises to the secreted. Functionally, plays a role in neuronal plasticity and the proteolytic action may subserve structural reorganizations associated with learning and memory operations. This Pongo pygmaeus (Bornean orangutan) protein is Neurotrypsin (PRSS12).